The chain runs to 390 residues: Formate-dependent phosphoribosylglycinamide formyltransferase (390 aa).

Residues 14 to 15 (EL) and E74 contribute to the N(1)-(5-phospho-beta-D-ribosyl)glycinamide site. ATP contacts are provided by residues R106, K147, 152-157 (SSGKGQ), 187-190 (EQFI), and E195. The ATP-grasp domain occupies 111 to 304 (DLAAQELGIT…EFDLHARAIM (194 aa)). E263 and E275 together coordinate Mg(2+). N(1)-(5-phospho-beta-D-ribosyl)glycinamide is bound by residues D282, K351, and 358-359 (RR).

It belongs to the PurK/PurT family. Homodimer.

The enzyme catalyses N(1)-(5-phospho-beta-D-ribosyl)glycinamide + formate + ATP = N(2)-formyl-N(1)-(5-phospho-beta-D-ribosyl)glycinamide + ADP + phosphate + H(+). It participates in purine metabolism; IMP biosynthesis via de novo pathway; N(2)-formyl-N(1)-(5-phospho-D-ribosyl)glycinamide from N(1)-(5-phospho-D-ribosyl)glycinamide (formate route): step 1/1. In terms of biological role, involved in the de novo purine biosynthesis. Catalyzes the transfer of formate to 5-phospho-ribosyl-glycinamide (GAR), producing 5-phospho-ribosyl-N-formylglycinamide (FGAR). Formate is provided by PurU via hydrolysis of 10-formyl-tetrahydrofolate. The chain is Formate-dependent phosphoribosylglycinamide formyltransferase from Erythrobacter litoralis (strain HTCC2594).